A 256-amino-acid polypeptide reads, in one-letter code: Isoprenyl transferase (256 aa).

The active site involves aspartate 33. Aspartate 33 contacts Mg(2+). Residues 34 to 37 (GNGR), tryptophan 38, arginine 46, histidine 50, and 78 to 80 (STE) each bind substrate. Residue asparagine 81 is the Proton acceptor of the active site. Substrate is bound by residues tryptophan 82, arginine 84, arginine 201, and 207–209 (RIS). Mg(2+) is bound at residue glutamate 220.

It belongs to the UPP synthase family. Homodimer. Mg(2+) serves as cofactor.

Functionally, catalyzes the condensation of isopentenyl diphosphate (IPP) with allylic pyrophosphates generating different type of terpenoids. The sequence is that of Isoprenyl transferase from Staphylococcus haemolyticus (strain JCSC1435).